Here is a 343-residue protein sequence, read N- to C-terminus: tRNA N6-adenosine threonylcarbamoyltransferase (343 aa).

His-120 and His-124 together coordinate Fe cation. Substrate-binding positions include 142-146 (VVSGG), Asp-175, Gly-188, Asp-192, and Asn-281. Residue Asp-310 coordinates Fe cation.

It belongs to the KAE1 / TsaD family. Fe(2+) serves as cofactor.

The protein localises to the cytoplasm. The enzyme catalyses L-threonylcarbamoyladenylate + adenosine(37) in tRNA = N(6)-L-threonylcarbamoyladenosine(37) in tRNA + AMP + H(+). Required for the formation of a threonylcarbamoyl group on adenosine at position 37 (t(6)A37) in tRNAs that read codons beginning with adenine. Is involved in the transfer of the threonylcarbamoyl moiety of threonylcarbamoyl-AMP (TC-AMP) to the N6 group of A37, together with TsaE and TsaB. TsaD likely plays a direct catalytic role in this reaction. The polypeptide is tRNA N6-adenosine threonylcarbamoyltransferase (Bacillus thuringiensis (strain Al Hakam)).